A 940-amino-acid polypeptide reads, in one-letter code: Valine--tRNA ligase (940 aa).

Residues Pro47 to His57 carry the 'HIGH' region motif. A 'KMSKS' region motif is present at residues Lys564–Ser568. ATP is bound at residue Lys567. A coiled-coil region spans residues Glu873–Ser905.

It belongs to the class-I aminoacyl-tRNA synthetase family. ValS type 1 subfamily. As to quaternary structure, monomer.

The protein resides in the cytoplasm. It carries out the reaction tRNA(Val) + L-valine + ATP = L-valyl-tRNA(Val) + AMP + diphosphate. Its function is as follows. Catalyzes the attachment of valine to tRNA(Val). As ValRS can inadvertently accommodate and process structurally similar amino acids such as threonine, to avoid such errors, it has a 'posttransfer' editing activity that hydrolyzes mischarged Thr-tRNA(Val) in a tRNA-dependent manner. The chain is Valine--tRNA ligase from Chlamydia pneumoniae (Chlamydophila pneumoniae).